The sequence spans 183 residues: Dual-action ribosomal maturation protein DarP (183 aa).

Residues methionine 1–valine 27 form a disordered region. Positions valine 9 to glutamate 18 are enriched in acidic residues.

Belongs to the DarP family.

The protein resides in the cytoplasm. In terms of biological role, member of a network of 50S ribosomal subunit biogenesis factors which assembles along the 30S-50S interface, preventing incorrect 23S rRNA structures from forming. Promotes peptidyl transferase center (PTC) maturation. In Bordetella parapertussis (strain 12822 / ATCC BAA-587 / NCTC 13253), this protein is Dual-action ribosomal maturation protein DarP.